The following is a 184-amino-acid chain: ATP synthase subunit delta (184 aa).

The protein belongs to the ATPase delta chain family. In terms of assembly, F-type ATPases have 2 components, F(1) - the catalytic core - and F(0) - the membrane proton channel. F(1) has five subunits: alpha(3), beta(3), gamma(1), delta(1), epsilon(1). F(0) has three main subunits: a(1), b(2) and c(10-14). The alpha and beta chains form an alternating ring which encloses part of the gamma chain. F(1) is attached to F(0) by a central stalk formed by the gamma and epsilon chains, while a peripheral stalk is formed by the delta and b chains.

The protein localises to the cell membrane. Its function is as follows. F(1)F(0) ATP synthase produces ATP from ADP in the presence of a proton or sodium gradient. F-type ATPases consist of two structural domains, F(1) containing the extramembraneous catalytic core and F(0) containing the membrane proton channel, linked together by a central stalk and a peripheral stalk. During catalysis, ATP synthesis in the catalytic domain of F(1) is coupled via a rotary mechanism of the central stalk subunits to proton translocation. In terms of biological role, this protein is part of the stalk that links CF(0) to CF(1). It either transmits conformational changes from CF(0) to CF(1) or is implicated in proton conduction. The protein is ATP synthase subunit delta of Wolbachia pipientis subsp. Culex pipiens (strain wPip).